Here is a 342-residue protein sequence, read N- to C-terminus: Tetraacyldisaccharide 4'-kinase (342 aa).

68–75 contributes to the ATP binding site; it reads TVGGTGKT.

The protein belongs to the LpxK family.

The catalysed reaction is a lipid A disaccharide + ATP = a lipid IVA + ADP + H(+). It participates in glycolipid biosynthesis; lipid IV(A) biosynthesis; lipid IV(A) from (3R)-3-hydroxytetradecanoyl-[acyl-carrier-protein] and UDP-N-acetyl-alpha-D-glucosamine: step 6/6. Its function is as follows. Transfers the gamma-phosphate of ATP to the 4'-position of a tetraacyldisaccharide 1-phosphate intermediate (termed DS-1-P) to form tetraacyldisaccharide 1,4'-bis-phosphate (lipid IVA). This is Tetraacyldisaccharide 4'-kinase from Burkholderia cenocepacia (strain HI2424).